Reading from the N-terminus, the 602-residue chain is Glutamyl-tRNA(Gln) amidotransferase subunit B, mitochondrial (602 aa).

The N-terminal 52 residues, 1 to 52 (MLQQWLRQSPAAAGLLRCSRYRGPQAALLQLSPQRAPTYHAIRSLQTSAAES), are a transit peptide targeting the mitochondrion. The interval 61–83 (QLKQGAKGLKAQKRQRRESEEAS) is disordered.

This sequence belongs to the GatB/GatE family. GatB subfamily. Subunit of the heterotrimeric GatCAB amidotransferase (AdT) complex, composed of A, B and C subunits.

The protein localises to the mitochondrion. The catalysed reaction is L-glutamyl-tRNA(Gln) + L-glutamine + ATP + H2O = L-glutaminyl-tRNA(Gln) + L-glutamate + ADP + phosphate + H(+). Its function is as follows. Allows the formation of correctly charged Gln-tRNA(Gln) through the transamidation of misacylated Glu-tRNA(Gln) in the mitochondria. The reaction takes place in the presence of glutamine and ATP through an activated gamma-phospho-Glu-tRNA(Gln). The sequence is that of Glutamyl-tRNA(Gln) amidotransferase subunit B, mitochondrial from Aspergillus clavatus (strain ATCC 1007 / CBS 513.65 / DSM 816 / NCTC 3887 / NRRL 1 / QM 1276 / 107).